The following is a 645-amino-acid chain: L-aspartate oxidase, chloroplastic (645 aa).

The transit peptide at 1–70 (MAALMNGFGS…RMRHKVGSIR (70 aa)) directs the protein to the chloroplast. FAD contacts are provided by residues 92-95 (SGVA), Lys-114, 121-128 (NTNYAQGG), and Asp-292. Arg-368 acts as the Proton donor/acceptor in catalysis. Residues Glu-453 and 469–470 (SL) contribute to the FAD site.

The protein belongs to the FAD-dependent oxidoreductase 2 family. NadB subfamily. Requires FAD as cofactor.

It localises to the plastid. Its subcellular location is the chloroplast. The catalysed reaction is L-aspartate + O2 = iminosuccinate + H2O2. It functions in the pathway cofactor biosynthesis; NAD(+) biosynthesis; iminoaspartate from L-aspartate (oxidase route): step 1/1. Catalyzes the oxidation of L-aspartate to iminoaspartate. This is L-aspartate oxidase, chloroplastic from Oryza sativa subsp. japonica (Rice).